A 170-amino-acid chain; its full sequence is Cysteine-rich venom protein VAR4 (170 aa).

An N-terminal signal peptide occupies residues M1–S22. In terms of domain architecture, SCP spans N41 to Y169. 3 disulfides stabilise this stretch: C77-C156, C95-C170, and C151-C167.

This sequence belongs to the CRISP family. In terms of processing, contains 8 disulfide bonds. In terms of tissue distribution, expressed by the venom gland.

It localises to the secreted. In terms of biological role, blocks ryanodine receptors, and potassium channels. In Varanus acanthurus (Ridge-tailed monitor), this protein is Cysteine-rich venom protein VAR4.